A 291-amino-acid polypeptide reads, in one-letter code: Protein-export membrane protein SecF (291 aa).

Transmembrane regions (helical) follow at residues 19–39, 134–154, 156–176, 187–209, 226–246, and 256–278; these read LVVI…SWYV, LALG…FLMF, VFVP…ISVA, LGTV…LLNN, MRTG…MAAV, and AAIG…LLNL.

The protein belongs to the SecD/SecF family. SecF subfamily. As to quaternary structure, part of the protein translocation apparatus. Forms a complex with SecD.

The protein localises to the cell membrane. In terms of biological role, involved in protein export. This is Protein-export membrane protein SecF from Haloquadratum walsbyi (strain DSM 16790 / HBSQ001).